The chain runs to 65 residues: Large ribosomal subunit protein bL32 (65 aa).

A disordered region spans residues 1–45; sequence MAVQQNKKTPSKRGMRRAHDVLKKPTFSVDFSSGETHRRHHVTPD.

This sequence belongs to the bacterial ribosomal protein bL32 family.

This is Large ribosomal subunit protein bL32 from Nitrosococcus oceani (strain ATCC 19707 / BCRC 17464 / JCM 30415 / NCIMB 11848 / C-107).